The chain runs to 630 residues: A disintegrin and metalloproteinase with thrombospondin motifs 4 (630 aa).

A propeptide spanning residues 1–5 is cleaved from the precursor; the sequence is RRTKR. One can recognise a Peptidase M12B domain in the interval 11–221; that stretch reads RFVETLVVAD…GYGHCLLDKP (211 aa). 11 disulfide bridges follow: C86–C138, C115–C120, C132–C216, C170–C200, C242–C265, C253–C275, C260–C294, C288–C299, C325–C362, C329–C367, and C340–C352. N96 carries an N-linked (GlcNAc...) asparagine glycan. H154 provides a ligand contact to Zn(2+). E155 is an active-site residue. Zn(2+) contacts are provided by H158 and H164. A Disintegrin domain is found at 233 to 303; sequence GKDYDADRQC…CMGGRCLHVD (71 aa). A TSP type-1 domain is found at 313–368; the sequence is AGGWGPWGPWGDCSRTCGGGVQFSSRDCTKPVPRNGGKYCEGRRTPFRSCNTKNCP. N474 carries an N-linked (GlcNAc...) asparagine glycan. The spacer stretch occupies residues 479–630; the sequence is SKQSGSFKKF…LRKRTWAGRK (152 aa).

In terms of assembly, interacts with SRPX2. Zn(2+) is required as a cofactor. Post-translationally, the precursor is cleaved by a furin endopeptidase. Glycosylated. Can be O-fucosylated by POFUT2 on a serine or a threonine residue found within the consensus sequence C1-X(2)-(S/T)-C2-G of the TSP type-1 repeat domains where C1 and C2 are the first and second cysteine residue of the repeat, respectively. Fucosylated repeats can then be further glycosylated by the addition of a beta-1,3-glucose residue by the glucosyltransferase, B3GALTL. Fucosylation mediates the efficient secretion of ADAMTS family members. Can also be C-glycosylated with one or two mannose molecules on tryptophan residues within the consensus sequence W-X-X-W of the TPRs, and N-glycosylated. These other glycosylations can also facilitate secretion. In terms of tissue distribution, brain specific.

It is found in the secreted. Its subcellular location is the extracellular space. It localises to the extracellular matrix. The catalysed reaction is Glutamyl endopeptidase. Bonds cleaved include 370-Thr-Glu-Gly-Glu-|-Ala-Arg-Gly-Ser-377 in the interglobular domain of mammalian aggrecan.. Its function is as follows. Cleaves aggrecan, a cartilage proteoglycan, at the '392-Glu-|-Ala-393' site and may be involved in its turnover. Also cleaves COMP. May play an important role in the destruction of aggrecan in arthritic diseases. The sequence is that of A disintegrin and metalloproteinase with thrombospondin motifs 4 (Adamts4) from Rattus norvegicus (Rat).